The chain runs to 271 residues: Ribosomal RNA small subunit methyltransferase A (271 aa).

H11, L13, G38, E59, D84, and N109 together coordinate S-adenosyl-L-methionine.

The protein belongs to the class I-like SAM-binding methyltransferase superfamily. rRNA adenine N(6)-methyltransferase family. RsmA subfamily.

It localises to the cytoplasm. The catalysed reaction is adenosine(1518)/adenosine(1519) in 16S rRNA + 4 S-adenosyl-L-methionine = N(6)-dimethyladenosine(1518)/N(6)-dimethyladenosine(1519) in 16S rRNA + 4 S-adenosyl-L-homocysteine + 4 H(+). Specifically dimethylates two adjacent adenosines (A1518 and A1519) in the loop of a conserved hairpin near the 3'-end of 16S rRNA in the 30S particle. May play a critical role in biogenesis of 30S subunits. In Nostoc sp. (strain PCC 7120 / SAG 25.82 / UTEX 2576), this protein is Ribosomal RNA small subunit methyltransferase A.